The following is a 103-amino-acid chain: uncharacterized protein (103 aa).

Residues Gly33–Ile57 form a helical membrane-spanning segment.

Its subcellular location is the membrane. This is an uncharacterized protein from Sinorhizobium fredii (strain NBRC 101917 / NGR234).